Consider the following 283-residue polypeptide: UPF0273 protein STK_18300 (283 aa).

A KaiC domain is found at 4-249 (LRVRTYIPGF…YLRITNVKAE (246 aa)). Residue 31-38 (GGPGTGKS) participates in ATP binding. The interval 261–283 (MKKAVEESEEEKESIQEAEIEEE) is disordered. The segment covering 267–283 (ESEEEKESIQEAEIEEE) has biased composition (acidic residues).

The protein belongs to the UPF0273 family.

The polypeptide is UPF0273 protein STK_18300 (Sulfurisphaera tokodaii (strain DSM 16993 / JCM 10545 / NBRC 100140 / 7) (Sulfolobus tokodaii)).